A 143-amino-acid polypeptide reads, in one-letter code: Large ribosomal subunit protein uL11 (143 aa).

Belongs to the universal ribosomal protein uL11 family. Part of the ribosomal stalk of the 50S ribosomal subunit. Interacts with L10 and the large rRNA to form the base of the stalk. L10 forms an elongated spine to which L12 dimers bind in a sequential fashion forming a multimeric L10(L12)X complex. One or more lysine residues are methylated.

Functionally, forms part of the ribosomal stalk which helps the ribosome interact with GTP-bound translation factors. The polypeptide is Large ribosomal subunit protein uL11 (Kineococcus radiotolerans (strain ATCC BAA-149 / DSM 14245 / SRS30216)).